A 419-amino-acid polypeptide reads, in one-letter code: UDP-N-acetylglucosamine 1-carboxyvinyltransferase 2 (419 aa).

24 to 25 (KN) is a binding site for phosphoenolpyruvate. R94 contacts UDP-N-acetyl-alpha-D-glucosamine. C118 functions as the Proton donor in the catalytic mechanism. The residue at position 118 (C118) is a 2-(S-cysteinyl)pyruvic acid O-phosphothioketal. UDP-N-acetyl-alpha-D-glucosamine is bound by residues 123 to 127 (RPIDQ), D307, and I329.

It belongs to the EPSP synthase family. MurA subfamily.

It localises to the cytoplasm. The enzyme catalyses phosphoenolpyruvate + UDP-N-acetyl-alpha-D-glucosamine = UDP-N-acetyl-3-O-(1-carboxyvinyl)-alpha-D-glucosamine + phosphate. It participates in cell wall biogenesis; peptidoglycan biosynthesis. Functionally, cell wall formation. Adds enolpyruvyl to UDP-N-acetylglucosamine. This chain is UDP-N-acetylglucosamine 1-carboxyvinyltransferase 2, found in Staphylococcus aureus (strain MRSA252).